Reading from the N-terminus, the 879-residue chain is Fanconi anemia core complex-associated protein 100 (879 aa).

Belongs to the multisubunit FA complex composed of FANCA, FANCB, FANCC, FANCE, FANCF, FANCG, FANCL/PHF9, FANCM, FAAP24 and FAAP100. Forms a subcomplex with FANCB and FANCL.

The protein resides in the nucleus. Its function is as follows. Plays a role in Fanconi anemia-associated DNA damage response network. Regulates FANCD2 monoubiquitination and the stability of the FA core complex. Induces chromosomal instability as well as hypersensitivity to DNA cross-linking agents, when repressed. This chain is Fanconi anemia core complex-associated protein 100, found in Mus musculus (Mouse).